The sequence spans 302 residues: ATP synthase subunit b 1 (302 aa).

Residues 5–22 traverse the membrane as a helical segment; it reads WFTVIAQGINFLLLLWLL. Residues 278–302 are disordered; that stretch reads GLPENEGTDNPEANPPHAEAKIPHA.

The protein belongs to the ATPase B chain family. In terms of assembly, F-type ATPases have 2 components, F(1) - the catalytic core - and F(0) - the membrane proton channel. F(1) has five subunits: alpha(3), beta(3), gamma(1), delta(1), epsilon(1). F(0) has three main subunits: a(1), b(2) and c(10-14). The alpha and beta chains form an alternating ring which encloses part of the gamma chain. F(1) is attached to F(0) by a central stalk formed by the gamma and epsilon chains, while a peripheral stalk is formed by the delta and b chains.

The protein resides in the cell inner membrane. Its function is as follows. F(1)F(0) ATP synthase produces ATP from ADP in the presence of a proton or sodium gradient. F-type ATPases consist of two structural domains, F(1) containing the extramembraneous catalytic core and F(0) containing the membrane proton channel, linked together by a central stalk and a peripheral stalk. During catalysis, ATP synthesis in the catalytic domain of F(1) is coupled via a rotary mechanism of the central stalk subunits to proton translocation. Component of the F(0) channel, it forms part of the peripheral stalk, linking F(1) to F(0). The polypeptide is ATP synthase subunit b 1 (Pseudoalteromonas atlantica (strain T6c / ATCC BAA-1087)).